A 134-amino-acid polypeptide reads, in one-letter code: Bradykinin-related peptides (134 aa).

Positions 1-22 are cleaved as a signal peptide; it reads MAFLKKSLFLVLFLGVVSLSFC. 3 consecutive propeptides follow at residues 23 to 44, 71 to 82, and 99 to 121; these read EEEKREEHEEEKRDEEDAESLG, RSISGLTPIRLS, and ISEADPGFTPSFVVIKGLSPLRG. The segment covering 24–33 has biased composition (basic and acidic residues); that stretch reads EEKREEHEEE. The tract at residues 24-71 is disordered; the sequence is EEKREEHEEEKRDEEDAESLGKRYGGLSPLRISKRVPPGFTPFRSPAR. A 4-hydroxyproline; partial; in form [Hyp3]-bradykinin and [Hyp3]-bradykinin-Val,Asp modification is found at Pro-126.

Belongs to the frog skin active peptide (FSAP) family. Bradykinin-related peptide subfamily. In terms of tissue distribution, expressed by the skin glands. Expression levels in inguinal glands are much higher than in granular glands.

Its subcellular location is the secreted. May produce in vitro relaxation of rat arterial smooth muscle and constriction of intestinal smooth muscle. May target bradykinin receptors (BDKRB). This is Bradykinin-related peptides from Physalaemus nattereri (Cuyaba dwarf frog).